Consider the following 256-residue polypeptide: 3-deoxy-manno-octulosonate cytidylyltransferase (256 aa).

The protein belongs to the KdsB family.

It localises to the cytoplasm. The enzyme catalyses 3-deoxy-alpha-D-manno-oct-2-ulosonate + CTP = CMP-3-deoxy-beta-D-manno-octulosonate + diphosphate. It participates in nucleotide-sugar biosynthesis; CMP-3-deoxy-D-manno-octulosonate biosynthesis; CMP-3-deoxy-D-manno-octulosonate from 3-deoxy-D-manno-octulosonate and CTP: step 1/1. It functions in the pathway bacterial outer membrane biogenesis; lipopolysaccharide biosynthesis. In terms of biological role, activates KDO (a required 8-carbon sugar) for incorporation into bacterial lipopolysaccharide in Gram-negative bacteria. This chain is 3-deoxy-manno-octulosonate cytidylyltransferase, found in Histophilus somni (strain 129Pt) (Haemophilus somnus).